The sequence spans 197 residues: 3-isopropylmalate dehydratase small subunit (197 aa).

This sequence belongs to the LeuD family. LeuD type 1 subfamily. Heterodimer of LeuC and LeuD.

It catalyses the reaction (2R,3S)-3-isopropylmalate = (2S)-2-isopropylmalate. It participates in amino-acid biosynthesis; L-leucine biosynthesis; L-leucine from 3-methyl-2-oxobutanoate: step 2/4. Catalyzes the isomerization between 2-isopropylmalate and 3-isopropylmalate, via the formation of 2-isopropylmaleate. This chain is 3-isopropylmalate dehydratase small subunit, found in Corynebacterium glutamicum (strain R).